Consider the following 147-residue polypeptide: uncharacterized protein (147 aa).

It to B.subtilis XkdM.

This is an uncharacterized protein from Bacillus subtilis (strain 168).